Here is a 998-residue protein sequence, read N- to C-terminus: Methyl sulfide methyltransferase-associated sensor (998 aa).

The 38-residue stretch at 40–77 folds into the PAS 1 domain; the sequence is FGYSPKDFISGGLGYADIIYPADLEIAVSQFFSYVEKD. In terms of domain architecture, PAC 1 spans 117–169; the sequence is FTQQYRLLNKSGDVLWVEAEIKVLEEEEGKAGLFQVTVFDISRWKHTEKAMPA. Positions 209–246 constitute a PAS 2 domain; it reads LGYTPEDFTSGRIVYTDIIHPDDLDNVRAEVSKNTEEG. The 53-residue stretch at 250–302 folds into the PAC 2 domain; the sequence is FSKEYRVLAKSGEVRYVDERTLIRRNEKGEITCYQGILLDITQRKEAEELILS. Residues 314–458 enclose the GAF 1 domain; sequence ASLDEVLLLL…NAYLAGIAIE (145 aa). Positions 469 to 540 constitute a PAS 3 domain; it reads SENRFRTIFD…ENMQKIKAEG (72 aa). Residues 609 to 752 enclose the GAF 2 domain; it reads ASLKEITDFA…LMQGMWQLIQ (144 aa). A heme-binding site is contributed by Cys656. Positions 783–998 constitute a Histidine kinase domain; sequence EFVEEMMFPE…GNLMHVKLPK (216 aa).

Heme serves as cofactor. In terms of processing, autophosphorylates: autophosphorylation is dependent on the redox state of heme cofactor and is promoted upon reduction.

It localises to the cytoplasm. It carries out the reaction ATP + protein L-histidine = ADP + protein N-phospho-L-histidine.. Heme-binding sensor kinase component part of a two-component regulatory system involved in methyl sulfide metabolism. Does not act as a phytochrome-like photoreceptor. This Methanosarcina acetivorans (strain ATCC 35395 / DSM 2834 / JCM 12185 / C2A) protein is Methyl sulfide methyltransferase-associated sensor (msmS).